The sequence spans 121 residues: uncharacterized protein (121 aa).

2 disordered regions span residues 1 to 28 and 60 to 82; these read MGCASAKHVATVQNEEEAQKGKNYQNGD and QENLEKSASSNVRLKTNKEVPGL. Phosphoserine occurs at positions 95 and 115.

Expressed in spleen, prostate, testis and uterus.

This is an uncharacterized protein from Homo sapiens (Human).